A 206-amino-acid polypeptide reads, in one-letter code: 3-isopropylmalate dehydratase small subunit (206 aa).

Belongs to the LeuD family. LeuD type 1 subfamily. As to quaternary structure, heterodimer of LeuC and LeuD.

The catalysed reaction is (2R,3S)-3-isopropylmalate = (2S)-2-isopropylmalate. The protein operates within amino-acid biosynthesis; L-leucine biosynthesis; L-leucine from 3-methyl-2-oxobutanoate: step 2/4. Catalyzes the isomerization between 2-isopropylmalate and 3-isopropylmalate, via the formation of 2-isopropylmaleate. The sequence is that of 3-isopropylmalate dehydratase small subunit from Acidobacterium capsulatum (strain ATCC 51196 / DSM 11244 / BCRC 80197 / JCM 7670 / NBRC 15755 / NCIMB 13165 / 161).